The chain runs to 275 residues: Homeobox-leucine zipper protein ATHB-17 (275 aa).

Residues 95 to 143 (SSPLSDEGSGGGRDQLRLDMNRLPSSEDGDDEEFSHDDGSAPPRKKLRL) are disordered. Residues 136 to 195 (PPRKKLRLTREQSRLLEDSFRQNHTLNPKQKEVLAKHLMLRPRQIEVWFQNRRARSKLKQ) constitute a DNA-binding region (homeobox). The interval 203-224 (LKRWFGSLTEENHRLHREVEEL) is leucine-zipper. Residues 252–275 (AASPSRAVVPVPAKKTFPPQERDR) form a disordered region.

It belongs to the HD-ZIP homeobox family. Class II subfamily.

Its subcellular location is the nucleus. In terms of biological role, probable transcription factor. The sequence is that of Homeobox-leucine zipper protein ATHB-17 (ATHB-17) from Arabidopsis thaliana (Mouse-ear cress).